A 162-amino-acid polypeptide reads, in one-letter code: Caveolin-2 (162 aa).

At 1–86 (MGLETEKADV…FEMSKYVIYK (86 aa)) the chain is on the cytoplasmic side. At tyrosine 19 the chain carries Phosphotyrosine; by SRC. Serine 20 and serine 23 each carry phosphoserine. Tyrosine 27 carries the phosphotyrosine; by SRC modification. The segment at residues 87-107 (FLTVFLAIPLAFAAGILFATL) is an intramembrane region (helical). The Cytoplasmic portion of the chain corresponds to 108–162 (SCLHIWIIMPFVKTCLMVLPSVQTIWKSVTDVVIAPLCTSIGRSFSSVSLQLSHD).

This sequence belongs to the caveolin family. Monomer or homodimer. Interacts with CAV1; the interaction forms a stable heterooligomeric complex that is required for targeting to lipid rafts and for caveolae formation. Tyrosine phosphorylated forms do not form heterooligomers with the Tyr-19-phosphorylated form existing as a monomer or dimer, and the Tyr-27-form as a monomer only. Interacts (tyrosine phosphorylated form) with the SH2 domain-containing proteins, RASA1, NCK1 and SRC. Interacts (tyrosine phosphorylated form) with INSR, the interaction (Tyr-27-phosphorylated form) is increased on insulin stimulation. Interacts (Tyr-19 phosphorylated form) with MAPK1 (phosphorylated form); the interaction, promoted by insulin, leads to nuclear location and MAPK1 activation. Interacts with STAT3; the interaction is increased on insulin-induced tyrosine phosphorylation leading to STAT activation. In terms of processing, phosphorylated on serine and tyrosine residues. CAV1 promotes phosphorylation on Ser-23 which then targets the complex to the plasma membrane, lipid rafts and caveolae. Phosphorylation on both Tyr-19 and Tyr-27 is required for insulin-induced 'Ser-727' phosphorylation of STAT3 and its activation. Phosphorylation on Tyr-19 is required for insulin-induced phosphorylation of MAPK1 and DNA binding of STAT3. Tyrosine phosphorylation is induced by both EGF and insulin. In terms of tissue distribution, expressed in aortic endothelial cells.

It is found in the nucleus. The protein localises to the cytoplasm. It localises to the golgi apparatus membrane. Its subcellular location is the cell membrane. The protein resides in the membrane. It is found in the caveola. Functionally, may act as a scaffolding protein within caveolar membranes. Interacts directly with G-protein alpha subunits and can functionally regulate their activity. Acts as an accessory protein in conjunction with CAV1 in targeting to lipid rafts and driving caveolae formation. Positive regulator of cellular mitogenesis of the MAPK signaling pathway. Required for the insulin-stimulated nuclear translocation and activation of MAPK1 and STAT3, and the subsequent regulation of cell cycle progression. The chain is Caveolin-2 (CAV2) from Bos taurus (Bovine).